Consider the following 465-residue polypeptide: A-type ATP synthase subunit B (465 aa).

The protein belongs to the ATPase alpha/beta chains family. In terms of assembly, has multiple subunits with at least A(3), B(3), C, D, E, F, H, I and proteolipid K(x).

Its subcellular location is the cell membrane. Its function is as follows. Component of the A-type ATP synthase that produces ATP from ADP in the presence of a proton gradient across the membrane. The B chain is a regulatory subunit. This is A-type ATP synthase subunit B from Pyrococcus horikoshii (strain ATCC 700860 / DSM 12428 / JCM 9974 / NBRC 100139 / OT-3).